The chain runs to 376 residues: MMYSRFRTVAGNLNCAAKRLSSSSTTTTTTSAPSELQQNLAALRARLAMESPSLSDFISLKSDNAYSVEVGTKKKPLPKPKWMKESIPGGEKYVQIKKKLRELKLHTVCEEAKCPNLGECWSGGETGTATATIMILGDTCTRGCRFCNVKTSRTPPPPDPDEPTNVAEAIASWGLDYVVITSVDRDDLPDQGSGHFTETVQKLKALKPSTLIEALVPDFRGNAECVEKVSKSGLDVFAHNIETVEELQSAVRDHRANFKQSLDVLMMAKEYAPAGTLTKTSIMLGCGETPDQIVKTMEKVRAAGVDVMTFGQYMRPSKRHMPVSEYITPEAFEKYQTLGMEMGFRYVASGPMVRSSYKAGEFYIKSMIDSDRAASS.

The [4Fe-4S] cluster site is built by cysteine 109, cysteine 114, cysteine 120, cysteine 140, cysteine 144, cysteine 147, and serine 356. The 221-residue stretch at 125–345 (ETGTATATIM…QTLGMEMGFR (221 aa)) folds into the Radical SAM core domain.

Belongs to the radical SAM superfamily. Lipoyl synthase family. [4Fe-4S] cluster serves as cofactor.

Its subcellular location is the mitochondrion. The enzyme catalyses [[Fe-S] cluster scaffold protein carrying a second [4Fe-4S](2+) cluster] + N(6)-octanoyl-L-lysyl-[protein] + 2 oxidized [2Fe-2S]-[ferredoxin] + 2 S-adenosyl-L-methionine + 4 H(+) = [[Fe-S] cluster scaffold protein] + N(6)-[(R)-dihydrolipoyl]-L-lysyl-[protein] + 4 Fe(3+) + 2 hydrogen sulfide + 2 5'-deoxyadenosine + 2 L-methionine + 2 reduced [2Fe-2S]-[ferredoxin]. It participates in protein modification; protein lipoylation via endogenous pathway; protein N(6)-(lipoyl)lysine from octanoyl-[acyl-carrier-protein]: step 2/2. In terms of biological role, catalyzes the radical-mediated insertion of two sulfur atoms into the C-6 and C-8 positions of the octanoyl moiety bound to the lipoyl domains of lipoate-dependent enzymes, thereby converting the octanoylated domains into lipoylated derivatives. The sequence is that of Lipoyl synthase 1, mitochondrial from Pisum sativum (Garden pea).